The chain runs to 156 residues: RNA pyrophosphohydrolase (156 aa).

The Nudix hydrolase domain occupies 6-148; the sequence is NYRPNVAAIV…KKNIYVKVIK (143 aa). The short motif at 43 to 64 is the Nudix box element; that stretch reads GGIDKGESVKNALFRELKEEIG.

The protein belongs to the Nudix hydrolase family. RppH subfamily. A divalent metal cation serves as cofactor.

Functionally, accelerates the degradation of transcripts by removing pyrophosphate from the 5'-end of triphosphorylated RNA, leading to a more labile monophosphorylated state that can stimulate subsequent ribonuclease cleavage. The sequence is that of RNA pyrophosphohydrolase from Campylobacter jejuni subsp. jejuni serotype O:6 (strain 81116 / NCTC 11828).